The chain runs to 217 residues: TPA-induced transmembrane protein (217 aa).

Residues Met-1–Ser-37 are disordered. The helical transmembrane segment at Leu-66–Cys-86 threads the bilayer.

Interacts with LIPH. As to expression, detected predominantly in the skin, with strongest expression in the inner root sheath of the hair follicle.

The protein localises to the endoplasmic reticulum. Its subcellular location is the cell membrane. In terms of biological role, has a role in LIPH-mediated synthesis of 2-acyl lysophosphatidic acid (LPA). LPA is a bioactive lipid mediator involved in different biological processes, and necessary to promote hair formation and growth. The sequence is that of TPA-induced transmembrane protein (TTMP) from Homo sapiens (Human).